The sequence spans 355 residues: 3-dehydroquinate synthase (355 aa).

Residues 71–76 (EGEASK), 105–109 (GVVGD), 129–130 (TS), Lys142, and Lys151 contribute to the NAD(+) site. The Zn(2+) site is built by Glu184, His246, and His263.

The protein belongs to the sugar phosphate cyclases superfamily. Dehydroquinate synthase family. It depends on Co(2+) as a cofactor. The cofactor is Zn(2+). NAD(+) serves as cofactor.

The protein localises to the cytoplasm. The enzyme catalyses 7-phospho-2-dehydro-3-deoxy-D-arabino-heptonate = 3-dehydroquinate + phosphate. Its pathway is metabolic intermediate biosynthesis; chorismate biosynthesis; chorismate from D-erythrose 4-phosphate and phosphoenolpyruvate: step 2/7. Functionally, catalyzes the conversion of 3-deoxy-D-arabino-heptulosonate 7-phosphate (DAHP) to dehydroquinate (DHQ). The chain is 3-dehydroquinate synthase from Streptococcus thermophilus (strain CNRZ 1066).